The primary structure comprises 211 residues: Transcriptional regulator NarO (211 aa).

The 52-residue stretch at 154–205 (LTARQREVLETAHEMGYFEHPREANATEVAAALDINRSTFTEHLSAAQSKLL) folds into the HTH bat-type domain.

Its function is as follows. Activates transcription of the denitrifying genes (nitrate reductase narA and nitrite reductase nirK) under anaerobic conditions. The protein is Transcriptional regulator NarO of Haloferax volcanii (strain ATCC 29605 / DSM 3757 / JCM 8879 / NBRC 14742 / NCIMB 2012 / VKM B-1768 / DS2) (Halobacterium volcanii).